Reading from the N-terminus, the 89-residue chain is Small ribosomal subunit protein uS14A (89 aa).

Belongs to the universal ribosomal protein uS14 family. Part of the 30S ribosomal subunit. Contacts proteins S3 and S10.

In terms of biological role, binds 16S rRNA, required for the assembly of 30S particles and may also be responsible for determining the conformation of the 16S rRNA at the A site. The chain is Small ribosomal subunit protein uS14A from Levilactobacillus brevis (strain ATCC 367 / BCRC 12310 / CIP 105137 / JCM 1170 / LMG 11437 / NCIMB 947 / NCTC 947) (Lactobacillus brevis).